Reading from the N-terminus, the 212-residue chain is Glycerol-3-phosphate acyltransferase (212 aa).

A run of 5 helical transmembrane segments spans residues 3-23 (LILL…LWIG), 69-89 (LLPM…FFAI), 110-130 (AGIL…IFFF), 143-163 (VIAA…HFLL), and 165-185 (DYDF…IIRH).

The protein belongs to the PlsY family. Probably interacts with PlsX.

It is found in the cell membrane. It carries out the reaction an acyl phosphate + sn-glycerol 3-phosphate = a 1-acyl-sn-glycero-3-phosphate + phosphate. Its pathway is lipid metabolism; phospholipid metabolism. Catalyzes the transfer of an acyl group from acyl-phosphate (acyl-PO(4)) to glycerol-3-phosphate (G3P) to form lysophosphatidic acid (LPA). This enzyme utilizes acyl-phosphate as fatty acyl donor, but not acyl-CoA or acyl-ACP. This is Glycerol-3-phosphate acyltransferase from Streptococcus mutans serotype c (strain ATCC 700610 / UA159).